A 470-amino-acid polypeptide reads, in one-letter code: Cysteine--tRNA ligase (470 aa).

Cys27 lines the Zn(2+) pocket. Residues 29-39 carry the 'HIGH' region motif; the sequence is PTVYNYIHIGN. 3 residues coordinate Zn(2+): Cys207, His232, and Glu236. The short motif at 264–268 is the 'KMSKS' region element; that stretch reads KMSKS. Lys267 contacts ATP.

This sequence belongs to the class-I aminoacyl-tRNA synthetase family. Monomer. Zn(2+) is required as a cofactor.

It is found in the cytoplasm. The catalysed reaction is tRNA(Cys) + L-cysteine + ATP = L-cysteinyl-tRNA(Cys) + AMP + diphosphate. The protein is Cysteine--tRNA ligase of Lachnoclostridium phytofermentans (strain ATCC 700394 / DSM 18823 / ISDg) (Clostridium phytofermentans).